We begin with the raw amino-acid sequence, 143 residues long: MFLGTYTPKLDEKGRLTLPAKFRDALAGGLMVTKGQDHSLAVYPREEFTALARKAAAASRSDPEARAFVRGLAAGTDEQHADAQGRITLSADHRRYAGLSKDCVVIGSVDFLEIWDAQAWQTYVEANEENYSQATGVALGEIV.

SpoVT-AbrB domains lie at 5–47 (TYTP…PREE) and 76–119 (TDEQ…DAQA).

This sequence belongs to the MraZ family. In terms of assembly, forms oligomers.

Its subcellular location is the cytoplasm. It is found in the nucleoid. This chain is Transcriptional regulator MraZ, found in Rhodococcus jostii (strain RHA1).